The chain runs to 466 residues: Argininosuccinate lyase 1 (466 aa).

The protein belongs to the lyase 1 family. Argininosuccinate lyase subfamily.

The protein localises to the cytoplasm. The enzyme catalyses 2-(N(omega)-L-arginino)succinate = fumarate + L-arginine. The protein operates within amino-acid biosynthesis; L-arginine biosynthesis; L-arginine from L-ornithine and carbamoyl phosphate: step 3/3. The chain is Argininosuccinate lyase 1 from Mesorhizobium japonicum (strain LMG 29417 / CECT 9101 / MAFF 303099) (Mesorhizobium loti (strain MAFF 303099)).